The sequence spans 321 residues: uncharacterized protein (321 aa).

This is an uncharacterized protein from Sinorhizobium fredii (strain NBRC 101917 / NGR234).